A 545-amino-acid polypeptide reads, in one-letter code: CTP synthase (545 aa).

The segment at 1–266 (MATNYIFVTG…DDIVTKRFNL (266 aa)) is amidoligase domain. Ser14 provides a ligand contact to CTP. Residue Ser14 participates in UTP binding. Residues 15 to 20 (SLGKGI) and Asp72 contribute to the ATP site. Mg(2+) is bound by residues Asp72 and Glu140. CTP contacts are provided by residues 147–149 (DIE), 187–192 (KTKPTQ), and Lys223. Residues 187–192 (KTKPTQ) and Lys223 contribute to the UTP site. 239–241 (RDV) contacts ATP. Residues 291–542 (TVGFVGKYVE…IEAAGEFHKE (252 aa)) form the Glutamine amidotransferase type-1 domain. Gly352 is an L-glutamine binding site. Residue Cys379 is the Nucleophile; for glutamine hydrolysis of the active site. L-glutamine is bound by residues 380 to 383 (LGMQ), Glu403, and Arg470. Catalysis depends on residues His515 and Glu517.

The protein belongs to the CTP synthase family. Homotetramer.

The enzyme catalyses UTP + L-glutamine + ATP + H2O = CTP + L-glutamate + ADP + phosphate + 2 H(+). The catalysed reaction is L-glutamine + H2O = L-glutamate + NH4(+). It carries out the reaction UTP + NH4(+) + ATP = CTP + ADP + phosphate + 2 H(+). Its pathway is pyrimidine metabolism; CTP biosynthesis via de novo pathway; CTP from UDP: step 2/2. Allosterically activated by GTP, when glutamine is the substrate; GTP has no effect on the reaction when ammonia is the substrate. The allosteric effector GTP functions by stabilizing the protein conformation that binds the tetrahedral intermediate(s) formed during glutamine hydrolysis. Inhibited by the product CTP, via allosteric rather than competitive inhibition. Catalyzes the ATP-dependent amination of UTP to CTP with either L-glutamine or ammonia as the source of nitrogen. Regulates intracellular CTP levels through interactions with the four ribonucleotide triphosphates. This is CTP synthase from Idiomarina loihiensis (strain ATCC BAA-735 / DSM 15497 / L2-TR).